The primary structure comprises 1397 residues: Centlein (1397 aa).

Disordered stretches follow at residues 1 to 43 (MAAR…GLAG) and 56 to 76 (LWRG…GAAV). The residue at position 2 (alanine 2) is an N-acetylalanine. Residues serine 5, serine 9, and serine 22 each carry the phosphoserine modification. Coiled-coil stretches lie at residues 95–126 (EEAK…KEFV) and 405–481 (VVNL…KLMA). Disordered stretches follow at residues 422–449 (LKEK…SGKA) and 485–521 (CDQD…SEEL). Basic and acidic residues predominate over residues 485-503 (CDQDFSEKGTEGKHKEPPV). 3 coiled-coil regions span residues 674–778 (KNEK…KALR), 973–1114 (ISLR…MELL), and 1152–1299 (SESN…LKKM). A Phosphoserine modification is found at serine 1219. Threonine 1334 is subject to Phosphothreonine.

Interacts with CEP250 and CEP68. Interacts with NEK2; the interaction leads to phosphorylation of CNTLN. Phosphorylated directly or indirectly by NEK2.

The protein localises to the cytoplasm. Its subcellular location is the cytoskeleton. It is found in the microtubule organizing center. The protein resides in the centrosome. It localises to the centriole. Required for centrosome cohesion and recruitment of CEP68 to centrosomes. The chain is Centlein from Mus musculus (Mouse).